The sequence spans 456 residues: Adenylosuccinate synthetase isozyme 2 (456 aa).

Positions 1-14 are enriched in polar residues; it reads MSISESSPAATSLP. Residues 1-24 are disordered; sequence MSISESSPAATSLPNGDCGRPRAR. GTP is bound by residues 39 to 45 and 67 to 69; these read GDEGKGK and GHT. Asp-40 (proton acceptor) is an active-site residue. Mg(2+) contacts are provided by Asp-40 and Gly-67. Asp-40 contributes to the substrate binding site. Residues 40-43, 65-68, Thr-162, Arg-176, Asn-255, Thr-270, and Arg-334 each bind IMP; these read DEGK and NAGH. The active-site Proton donor is His-68. 330 to 336 contacts substrate; that stretch reads VTTGRKR. Residues Arg-336, 362 to 364, and 444 to 447 each bind GTP; these read KLD and GVGK.

Belongs to the adenylosuccinate synthetase family. In terms of assembly, homodimer. Requires Mg(2+) as cofactor.

Its subcellular location is the cytoplasm. It localises to the mitochondrion. The catalysed reaction is IMP + L-aspartate + GTP = N(6)-(1,2-dicarboxyethyl)-AMP + GDP + phosphate + 2 H(+). Its pathway is purine metabolism; AMP biosynthesis via de novo pathway; AMP from IMP: step 1/2. Inhibited competitively by AMP and IMP and non-competitively by fructose 1,6-bisphosphate. In terms of biological role, plays an important role in the de novo pathway and in the salvage pathway of purine nucleotide biosynthesis. Catalyzes the first committed step in the biosynthesis of AMP from IMP. The chain is Adenylosuccinate synthetase isozyme 2 (Adss2) from Mus musculus (Mouse).